The sequence spans 472 residues: Phosphoenolpyruvate carboxykinase (ATP), glycosomal (472 aa).

Gly-221 to Thr-228 lines the ATP pocket.

The protein belongs to the phosphoenolpyruvate carboxykinase (ATP) family. Homodimer.

The protein resides in the glycosome. The enzyme catalyses oxaloacetate + ATP = phosphoenolpyruvate + ADP + CO2. It functions in the pathway carbohydrate biosynthesis; gluconeogenesis. In terms of biological role, P60 has the capability to bind to microtubules and membrane vesicles in vitro. The chain is Phosphoenolpyruvate carboxykinase (ATP), glycosomal from Trypanosoma brucei brucei.